The chain runs to 930 residues: Isoleucine--tRNA ligase (930 aa).

Positions 57–67 match the 'HIGH' region motif; that stretch reads PYANGNIHVGH. Glu-554 provides a ligand contact to L-isoleucyl-5'-AMP. The 'KMSKS' region signature appears at 595-599; that stretch reads KMSKS. Lys-598 contributes to the ATP binding site.

It belongs to the class-I aminoacyl-tRNA synthetase family. IleS type 1 subfamily. In terms of assembly, monomer.

It localises to the cytoplasm. It carries out the reaction tRNA(Ile) + L-isoleucine + ATP = L-isoleucyl-tRNA(Ile) + AMP + diphosphate. Functionally, catalyzes the attachment of isoleucine to tRNA(Ile). As IleRS can inadvertently accommodate and process structurally similar amino acids such as valine, to avoid such errors it has two additional distinct tRNA(Ile)-dependent editing activities. One activity is designated as 'pretransfer' editing and involves the hydrolysis of activated Val-AMP. The other activity is designated 'posttransfer' editing and involves deacylation of mischarged Val-tRNA(Ile). This is Isoleucine--tRNA ligase from Streptococcus agalactiae serotype III (strain NEM316).